Reading from the N-terminus, the 63-residue chain is Large ribosomal subunit protein bL35 (63 aa).

This sequence belongs to the bacterial ribosomal protein bL35 family.

The sequence is that of Large ribosomal subunit protein bL35 from Campylobacter fetus subsp. fetus (strain 82-40).